The chain runs to 90 residues: Mitochondrial import inner membrane translocase subunit Tim10-B (90 aa).

The short motif at Cys-29 to Cys-54 is the Twin CX3C motif element. Disulfide bonds link Cys-29-Cys-54 and Cys-33-Cys-50.

This sequence belongs to the small Tim family. As to quaternary structure, heterohexamer; composed of 3 copies of TIMM9 and 3 copies of TIMM10/TIM10A, named soluble 70 kDa complex. The complex forms a 6-bladed alpha-propeller structure and associates with the TIMM22 component of the TIM22 complex. Interacts with multi-pass transmembrane proteins in transit.

It is found in the mitochondrion inner membrane. In terms of biological role, mitochondrial intermembrane chaperone that participates in the import and insertion of multi-pass transmembrane proteins into the mitochondrial inner membrane. May also be required for the transfer of beta-barrel precursors from the TOM complex to the sorting and assembly machinery (SAM complex) of the outer membrane. Acts as a chaperone-like protein that protects the hydrophobic precursors from aggregation and guide them through the mitochondrial intermembrane space. The protein is Mitochondrial import inner membrane translocase subunit Tim10-B (timm10-b) of Xenopus laevis (African clawed frog).